The chain runs to 134 residues: 16 kDa beta-galactoside-binding lectin (134 aa).

Position 1 is an N-acetylmethionine (methionine 1). Residues 4–134 (GLVVTQLDVQ…DFKVKAIKFS (131 aa)) enclose the Galectin domain. 69 to 75 (WGEEDRK) serves as a coordination point for a beta-D-galactoside.

As to quaternary structure, homodimer. As to expression, mainly in the liver (adult), mainly in the muscle (embryo).

Functionally, this protein binds beta-galactoside. Its physiological function is not yet known. It may be involved in the regulation of differentiation. This Gallus gallus (Chicken) protein is 16 kDa beta-galactoside-binding lectin.